A 216-amino-acid polypeptide reads, in one-letter code: Regulator of G-protein signaling 19 (216 aa).

The span at 1 to 19 (MPTPHEAEKQHTGPEEADR) shows a compositional bias: basic and acidic residues. The interval 1 to 30 (MPTPHEAEKQHTGPEEADRPPSMSSHDAAP) is disordered. Residue Ser-24 is modified to Phosphoserine; by CK2. Positions 90–206 (SFDKLMHSPT…LTSPTYRSLL (117 aa)) constitute an RGS domain. Ser-97 carries the phosphoserine modification. The residue at position 151 (Ser-151) is a Phosphoserine; by MAPK1 and MAPK3. The segment at 207-216 (LQGAPQSSEA) is interaction with GIPC.

Interacts with GIPC PDZ domain. Interacts with GNAO1. In terms of processing, fatty acylated. Heavily palmitoylated in the cysteine string motif. Phosphorylated, mainly on serine residues.

It is found in the membrane. Inhibits signal transduction by increasing the GTPase activity of G protein alpha subunits thereby driving them into their inactive GDP-bound form. Binds to G-alpha subfamily 1 members, predominantly to G(i)-alpha-3. Activity on G(z)-alpha is inhibited by phosphorylation and palmitoylation of the G-protein. The protein is Regulator of G-protein signaling 19 (Rgs19) of Rattus norvegicus (Rat).